The primary structure comprises 122 residues: Large ribosomal subunit protein uL14 (122 aa).

The protein belongs to the universal ribosomal protein uL14 family. In terms of assembly, part of the 50S ribosomal subunit. Forms a cluster with proteins L3 and L19. In the 70S ribosome, L14 and L19 interact and together make contacts with the 16S rRNA in bridges B5 and B8.

Its function is as follows. Binds to 23S rRNA. Forms part of two intersubunit bridges in the 70S ribosome. This is Large ribosomal subunit protein uL14 from Streptococcus gordonii (strain Challis / ATCC 35105 / BCRC 15272 / CH1 / DL1 / V288).